The sequence spans 662 residues: DNA ligase (662 aa).

Residues 31 to 35 (DSEYD), 79 to 80 (SL), and Glu119 each bind NAD(+). Residue Lys121 is the N6-AMP-lysine intermediate of the active site. The NAD(+) site is built by Arg142, Glu176, Lys288, and Lys312. Residues Cys405, Cys408, Cys421, and Cys427 each contribute to the Zn(2+) site. Residues 583-662 (NIEKKLDNLT…DELNSFLDNL (80 aa)) form the BRCT domain.

It belongs to the NAD-dependent DNA ligase family. LigA subfamily. Mg(2+) serves as cofactor. Requires Mn(2+) as cofactor.

It carries out the reaction NAD(+) + (deoxyribonucleotide)n-3'-hydroxyl + 5'-phospho-(deoxyribonucleotide)m = (deoxyribonucleotide)n+m + AMP + beta-nicotinamide D-nucleotide.. In terms of biological role, DNA ligase that catalyzes the formation of phosphodiester linkages between 5'-phosphoryl and 3'-hydroxyl groups in double-stranded DNA using NAD as a coenzyme and as the energy source for the reaction. It is essential for DNA replication and repair of damaged DNA. In Finegoldia magna (strain ATCC 29328 / DSM 20472 / WAL 2508) (Peptostreptococcus magnus), this protein is DNA ligase.